The primary structure comprises 115 residues: NADH-ubiquinone oxidoreductase chain 3 (115 aa).

Helical transmembrane passes span 3–23 (LIMV…VAFW), 55–75 (FFLV…LLPI), and 84–104 (INTM…GLAY).

This sequence belongs to the complex I subunit 3 family. As to quaternary structure, core subunit of respiratory chain NADH dehydrogenase (Complex I) which is composed of 45 different subunits. Interacts with TMEM186. Interacts with TMEM242.

It localises to the mitochondrion inner membrane. The catalysed reaction is a ubiquinone + NADH + 5 H(+)(in) = a ubiquinol + NAD(+) + 4 H(+)(out). Its function is as follows. Core subunit of the mitochondrial membrane respiratory chain NADH dehydrogenase (Complex I) which catalyzes electron transfer from NADH through the respiratory chain, using ubiquinone as an electron acceptor. Essential for the catalytic activity of complex I. The sequence is that of NADH-ubiquinone oxidoreductase chain 3 from Scotinomys teguina (Alston's brown mouse).